A 217-amino-acid polypeptide reads, in one-letter code: Thiamine-phosphate synthase (217 aa).

4-amino-2-methyl-5-(diphosphooxymethyl)pyrimidine contacts are provided by residues 39–43 (QLRRK) and N71. Mg(2+) is bound by residues D72 and D91. 4-amino-2-methyl-5-(diphosphooxymethyl)pyrimidine is bound at residue S110. 2-[(2R,5Z)-2-carboxy-4-methylthiazol-5(2H)-ylidene]ethyl phosphate is bound at residue 137–139 (SPT). K140 lines the 4-amino-2-methyl-5-(diphosphooxymethyl)pyrimidine pocket. Residues G173 and 193-194 (IS) each bind 2-[(2R,5Z)-2-carboxy-4-methylthiazol-5(2H)-ylidene]ethyl phosphate.

The protein belongs to the thiamine-phosphate synthase family. Requires Mg(2+) as cofactor.

The catalysed reaction is 2-[(2R,5Z)-2-carboxy-4-methylthiazol-5(2H)-ylidene]ethyl phosphate + 4-amino-2-methyl-5-(diphosphooxymethyl)pyrimidine + 2 H(+) = thiamine phosphate + CO2 + diphosphate. The enzyme catalyses 2-(2-carboxy-4-methylthiazol-5-yl)ethyl phosphate + 4-amino-2-methyl-5-(diphosphooxymethyl)pyrimidine + 2 H(+) = thiamine phosphate + CO2 + diphosphate. It catalyses the reaction 4-methyl-5-(2-phosphooxyethyl)-thiazole + 4-amino-2-methyl-5-(diphosphooxymethyl)pyrimidine + H(+) = thiamine phosphate + diphosphate. It participates in cofactor biosynthesis; thiamine diphosphate biosynthesis; thiamine phosphate from 4-amino-2-methyl-5-diphosphomethylpyrimidine and 4-methyl-5-(2-phosphoethyl)-thiazole: step 1/1. Its function is as follows. Condenses 4-methyl-5-(beta-hydroxyethyl)thiazole monophosphate (THZ-P) and 2-methyl-4-amino-5-hydroxymethyl pyrimidine pyrophosphate (HMP-PP) to form thiamine monophosphate (TMP). In Bordetella parapertussis (strain 12822 / ATCC BAA-587 / NCTC 13253), this protein is Thiamine-phosphate synthase.